The following is a 575-amino-acid chain: MSKLNPRVAHNPVLSRIIESGRTNLPSGITSAGSLSAYAQAAAVTIRDNRDREKREIADLNNRLARYVEKVRFLEAQNRVLENDIGLFRQAAHIHTGKVRDYYDAEKTSLATLVREQEAKVSSAKQNIRKLEPEITTAIRTLASSLEHRQRVRSDKKEQLKHLSDLESETAYIKRLINDCDDEKSHLKTEISRIRGEIKRILALRDKERNGFSRSQTAAQDLLKKLNATISTHEIAIREEINKARRDSTDKNREFFHRELHMSMKEIRDQFESDSKKARKTWEEWYKKKITEIKKRSEKFSLTQNQAREEVLRIRSLLNELRTKISDADSMTQALSKRIEDMKFREDEELRMFEQSLTEKELAVTRMRDECAKLSVELETLVENQINLRSEIAHYRKLMEQAENLRTSYQSDFVIDTPSPLMRTSSHHYGSSYSLNVRDTHNKTVHHDNYDISSASTINTQQFRSYGKGDVKIIEHKDESIVIENSNSYKSKDLSNWKINHYVNGALTGTFILPVATHIHPHEKISIHSLKSPNLMDDIVATQIYSFDFSKNTKTVLLDDVDDEVGWYAHVSYSH.

The tract at residues 1-56 (MSKLNPRVAHNPVLSRIIESGRTNLPSGITSAGSLSAYAQAAAVTIRDNRDREKRE) is head. The region spanning 53–406 (EKREIADLNN…KLMEQAENLR (354 aa)) is the IF rod domain. The coil 1A stretch occupies residues 57–88 (IADLNNRLARYVEKVRFLEAQNRVLENDIGLF). The segment at 89–102 (RQAAHIHTGKVRDY) is linker 1. The segment at 103–240 (YDAEKTSLAT…STHEIAIREE (138 aa)) is coil 1B. Residues 241–258 (INKARRDSTDKNREFFHR) form a linker 12 region. Residues 259-408 (ELHMSMKEIR…MEQAENLRTS (150 aa)) form a coil 2 region. Positions 409–572 (YQSDFVIDTP…DEVGWYAHVS (164 aa)) are tail. Residues 459–575 (NTQQFRSYGK…GWYAHVSYSH (117 aa)) form the LTD domain.

Belongs to the intermediate filament family.

The protein resides in the cytoplasm. Functionally, cytoplasmic intermediate filaments provide mechanical strength to cells. Not essential protein. The chain is Intermediate filament protein ifd-1 from Caenorhabditis elegans.